A 409-amino-acid chain; its full sequence is Dual-specificity RNA methyltransferase RlmN (409 aa).

Glutamate 121 (proton acceptor) is an active-site residue. One can recognise a Radical SAM core domain in the interval 127–376 (EEGRGTLCIS…IRTPRGRDIL (250 aa)). Cysteine 134 and cysteine 379 are joined by a disulfide. [4Fe-4S] cluster is bound by residues cysteine 141, cysteine 145, and cysteine 148. S-adenosyl-L-methionine is bound by residues 205 to 206 (GE), serine 237, 259 to 261 (SLH), and asparagine 336. The active-site S-methylcysteine intermediate is cysteine 379.

The protein belongs to the radical SAM superfamily. RlmN family. [4Fe-4S] cluster serves as cofactor.

It is found in the cytoplasm. It carries out the reaction adenosine(2503) in 23S rRNA + 2 reduced [2Fe-2S]-[ferredoxin] + 2 S-adenosyl-L-methionine = 2-methyladenosine(2503) in 23S rRNA + 5'-deoxyadenosine + L-methionine + 2 oxidized [2Fe-2S]-[ferredoxin] + S-adenosyl-L-homocysteine. The catalysed reaction is adenosine(37) in tRNA + 2 reduced [2Fe-2S]-[ferredoxin] + 2 S-adenosyl-L-methionine = 2-methyladenosine(37) in tRNA + 5'-deoxyadenosine + L-methionine + 2 oxidized [2Fe-2S]-[ferredoxin] + S-adenosyl-L-homocysteine. In terms of biological role, specifically methylates position 2 of adenine 2503 in 23S rRNA and position 2 of adenine 37 in tRNAs. m2A2503 modification seems to play a crucial role in the proofreading step occurring at the peptidyl transferase center and thus would serve to optimize ribosomal fidelity. The chain is Dual-specificity RNA methyltransferase RlmN from Agrobacterium fabrum (strain C58 / ATCC 33970) (Agrobacterium tumefaciens (strain C58)).